Consider the following 282-residue polypeptide: tRNA pseudouridine synthase B (282 aa).

Residue D39 is the Nucleophile of the active site.

Belongs to the pseudouridine synthase TruB family. Type 1 subfamily.

The enzyme catalyses uridine(55) in tRNA = pseudouridine(55) in tRNA. Its function is as follows. Responsible for synthesis of pseudouridine from uracil-55 in the psi GC loop of transfer RNAs. In Borreliella burgdorferi (strain ATCC 35210 / DSM 4680 / CIP 102532 / B31) (Borrelia burgdorferi), this protein is tRNA pseudouridine synthase B.